The sequence spans 218 residues: Large ribosomal subunit protein uL3 (218 aa).

The protein belongs to the universal ribosomal protein uL3 family. Part of the 50S ribosomal subunit. Forms a cluster with proteins L14 and L19.

One of the primary rRNA binding proteins, it binds directly near the 3'-end of the 23S rRNA, where it nucleates assembly of the 50S subunit. The polypeptide is Large ribosomal subunit protein uL3 (Corynebacterium diphtheriae (strain ATCC 700971 / NCTC 13129 / Biotype gravis)).